The following is a 362-amino-acid chain: Peptide chain release factor 2 (362 aa).

Q250 bears the N5-methylglutamine mark.

Belongs to the prokaryotic/mitochondrial release factor family. Post-translationally, methylated by PrmC. Methylation increases the termination efficiency of RF2.

It is found in the cytoplasm. Its function is as follows. Peptide chain release factor 2 directs the termination of translation in response to the peptide chain termination codons UGA and UAA. The sequence is that of Peptide chain release factor 2 from Clostridium perfringens (strain ATCC 13124 / DSM 756 / JCM 1290 / NCIMB 6125 / NCTC 8237 / Type A).